The primary structure comprises 621 residues: Putative acyltransferase plsB1 (621 aa).

The HXXXXD motif signature appears at 123 to 128 (HRSYLD).

Belongs to the GPAT/DAPAT family.

It is found in the cell membrane. In Mycobacterium bovis (strain ATCC BAA-935 / AF2122/97), this protein is Putative acyltransferase plsB1 (plsB1).